Consider the following 1111-residue polypeptide: Protein NETWORKED 1C (1111 aa).

An NAB domain is found at 13–93 (YSWWWDSHNT…ERYNHATGVI (81 aa)). 3 coiled-coil regions span residues 202-287 (SESE…KESS), 314-605 (ERAS…LISE), and 642-752 (KTIG…LESK). Positions 850 to 870 (TGGGRSMRKQDGGSGRMRKQS) are disordered. A coiled-coil region spans residues 943-1009 (NREVNKRRVL…EGEEAIEKLF (67 aa)).

It belongs to the NET family.

Plant-specific actin binding protein. May be part of a membrane-cytoskeletal adapter complex. This chain is Protein NETWORKED 1C, found in Arabidopsis thaliana (Mouse-ear cress).